A 212-amino-acid chain; its full sequence is Nitric oxide synthase (212 aa).

Position 11 (Tyr11) interacts with heme b. The segment at 30–50 (KKRAIGFKKLAKAVKFSTKLM) is calmodulin-binding. The region spanning 60–212 (ATILYATETG…AVDTLLEELG (153 aa)) is the Flavodoxin-like domain. The segment at 155-175 (SYSDSRKSSSDEPEHKDNFES) is disordered. Residues 158-173 (DSRKSSSDEPEHKDNF) show a composition bias toward basic and acidic residues. 186–212 (AFGLGSRAYPHFCAFARAVDTLLEELG) is a binding site for FMN.

This sequence belongs to the NOS family. Heme b serves as cofactor. It depends on FAD as a cofactor. FMN is required as a cofactor.

It catalyses the reaction 2 L-arginine + 3 NADPH + 4 O2 + H(+) = 2 L-citrulline + 2 nitric oxide + 3 NADP(+) + 4 H2O. In terms of biological role, produces nitric oxide (NO) which is a messenger molecule with diverse functions throughout the body. This Squalus acanthias (Spiny dogfish) protein is Nitric oxide synthase.